The chain runs to 480 residues: Cytochrome P450 monooxygenase ORF11 (480 aa).

A helical transmembrane segment spans residues 9 to 29; sequence LLLLPHLSALTPKTGFLIGLA. Residues Asn-265 and Asn-352 are each glycosylated (N-linked (GlcNAc...) asparagine). Residue Cys-449 participates in heme binding.

It belongs to the cytochrome P450 family. It depends on heme as a cofactor.

Its subcellular location is the membrane. Its pathway is sesquiterpene biosynthesis. Functionally, cytochrome P450 monooxygenase; part of the gene cluster that mediates the biosynthesis of PR-toxin, a bicyclic sesquiterpene belonging to the eremophilane class and acting as a mycotoxin. The first step of the pathway is catalyzed by the aristolochene synthase which performs the cyclization of trans,trans-farnesyl diphosphate (FPP) to the bicyclic sesquiterpene aristolochene. Following the formation of aristolochene, the non-oxygenated aristolochene is converted to the trioxygenated intermediate eremofortin B, via 7-epi-neopetasone. This conversion appears to involve three enzymes, a hydroxysterol oxidase-like enzyme, the quinone-oxidase prx3 that forms the quinone-type-structure in the bicyclic nucleus of aristolochene with the C8-oxo group and the C-3 hydroxyl group, and the P450 monooxygenase ORF6 that introduces the epoxide at the double bond between carbons 1 and 2. No monoxy or dioxy-intermediates have been reported to be released to the broth, so these three early oxidative reactions may be coupled together. Eremofortin B is further oxidized by another P450 monooxygenase, that introduces a second epoxide between carbons 7 and 11 prior to acetylation to eremofortin A by the acetyltransferase ORF8. The second epoxidation may be performed by a second P450 monooxygenase. After the acetylation step, eremofortin A is converted to eremofortin C and then to PR-toxin. First the conversion of eremofortin A to eremofortin C proceeds by oxidation of the side chain of the molecule at C-12 and is catalyzed by the short-chain oxidoreductase prx1. The cytochrome P450 monooxygenase ORF6 is probably also involved in this step. The primary alcohol formed at C-12 is finally oxidized by the short-chain alcohol dehydrogenase prx4 that forms PR-toxin. The sequence is that of Cytochrome P450 monooxygenase ORF11 from Penicillium roqueforti (strain FM164).